The primary structure comprises 158 residues: Small ribosomal subunit protein uS7 (158 aa).

Belongs to the universal ribosomal protein uS7 family. Part of the 30S ribosomal subunit. Contacts proteins S9 and S11.

Its function is as follows. One of the primary rRNA binding proteins, it binds directly to 16S rRNA where it nucleates assembly of the head domain of the 30S subunit. Is located at the subunit interface close to the decoding center, probably blocks exit of the E-site tRNA. This chain is Small ribosomal subunit protein uS7, found in Porphyromonas gingivalis (strain ATCC 33277 / DSM 20709 / CIP 103683 / JCM 12257 / NCTC 11834 / 2561).